The following is a 360-amino-acid chain: 3-dehydroquinate synthase (360 aa).

NAD(+)-binding positions include 71–76 (DGEQYK), 105–109 (GVVGD), 129–130 (TT), lysine 142, lysine 151, and 169–172 (TLNT). Positions 184, 248, and 265 each coordinate Zn(2+).

This sequence belongs to the sugar phosphate cyclases superfamily. Dehydroquinate synthase family. Requires Co(2+) as cofactor. It depends on Zn(2+) as a cofactor. The cofactor is NAD(+).

The protein resides in the cytoplasm. It carries out the reaction 7-phospho-2-dehydro-3-deoxy-D-arabino-heptonate = 3-dehydroquinate + phosphate. It functions in the pathway metabolic intermediate biosynthesis; chorismate biosynthesis; chorismate from D-erythrose 4-phosphate and phosphoenolpyruvate: step 2/7. Its function is as follows. Catalyzes the conversion of 3-deoxy-D-arabino-heptulosonate 7-phosphate (DAHP) to dehydroquinate (DHQ). The protein is 3-dehydroquinate synthase of Coxiella burnetii (strain CbuK_Q154) (Coxiella burnetii (strain Q154)).